The following is a 381-amino-acid chain: Pentraxin-related protein PTX3 (381 aa).

Positions methionine 1–alanine 17 are cleaved as a signal peptide. Coiled-coil stretches lie at residues leucine 74–arginine 101 and glutamate 143–glutamine 167. Intrachain disulfides connect cysteine 179/cysteine 357 and cysteine 210/cysteine 271. A Pentraxin (PTX) domain is found at cysteine 179–serine 381. Asparagine 220 is a glycosylation site (N-linked (GlcNAc...) asparagine).

Homooctamer; disulfide-linked. Binds to C1q. In terms of assembly, (Microbial infection) Interacts with SARS coronavirus-2/SARS-CoV-2 Nucleoprotein and Spike protein homotrimer. Post-translationally, glycosylated.

It is found in the secreted. Its function is as follows. Plays a role in the regulation of innate resistance to pathogens, inflammatory reactions, possibly clearance of self-components and female fertility. The polypeptide is Pentraxin-related protein PTX3 (Homo sapiens (Human)).